Here is a 192-residue protein sequence, read N- to C-terminus: Epididymal-specific lipocalin-5 (192 aa).

The signal sequence occupies residues 1–26; sequence MCSVARHMESIMLFTLLGLCVGLAAG. Residues Cys89 and Cys183 are joined by a disulfide bond.

The protein belongs to the calycin superfamily. Lipocalin family. In terms of processing, 2 different forms with differently processed N-termini exist. In terms of tissue distribution, epididymal fluid of the caudal and corpus regions (at protein level).

It localises to the secreted. Functionally, associates with spermatozoa in the epididymal fluid but does not bind tightly to them. Binds both all-trans and 13-cis retinoic acid. May act as a retinoid carrier protein which is required for epididymal function and/or sperm maturation. This chain is Epididymal-specific lipocalin-5, found in Mus musculus (Mouse).